A 94-amino-acid chain; its full sequence is PTS system galactitol-specific EIIB component (94 aa).

One can recognise a PTS EIIB type-2 domain in the interval 1–94 (MKRKIIVACG…QNKILTILQG (94 aa)). The Phosphocysteine intermediate; for EIIB activity role is filled by Cys9. Cys9 is subject to Phosphocysteine; by EIIA.

In terms of assembly, forms a complex with one each of subunit of GatA, GatB and 2 subunits of GatC.

The protein resides in the cytoplasm. It carries out the reaction galactitol(out) + N(pros)-phospho-L-histidyl-[protein] = galactitol 1-phosphate(in) + L-histidyl-[protein]. In terms of biological role, the phosphoenolpyruvate-dependent sugar phosphotransferase system (PTS), a major carbohydrate active transport system, catalyzes the phosphorylation of incoming sugar substrates concomitant with their translocation across the cell membrane. The enzyme II complex composed of GatA, GatB and GatC is involved in galactitol transport. This chain is PTS system galactitol-specific EIIB component (gatB), found in Escherichia coli O157:H7.